The primary structure comprises 317 residues: Adenosine receptor A3 (317 aa).

Over 1-14 (MPVNSTAVSWTSVT) the chain is Extracellular. The N-linked (GlcNAc...) asparagine glycan is linked to Asn-4. A helical membrane pass occupies residues 15 to 37 (YITVEILIGLCAIVGNVLVIWVV). The Cytoplasmic portion of the chain corresponds to 38–48 (KLNPSLQTTTF). Residues 49 to 72 (YFIVSLALADIAVGVLVMPLAIVI) traverse the membrane as a helical segment. Residues 73 to 84 (SLGVTIHFYSCL) are Extracellular-facing. The cysteines at positions 83 and 165 are disulfide-linked. A helical membrane pass occupies residues 85–106 (FMTCLMLIFTHASIMSLLAIAV). At 107–126 (DRYLRVKLTVRYRRVTTQRR) the chain is on the cytoplasmic side. Residues 127–148 (IWLALGLCWLVSFLVGLTPMFG) form a helical membrane-spanning segment. The Extracellular portion of the chain corresponds to 149-176 (WNMKLSSADENLTFLPCRFRSVMRMDYM). The N-linked (GlcNAc...) asparagine glycan is linked to Asn-159. A helical transmembrane segment spans residues 177-197 (VYFSFFLWILVPLVVMCAIYF). The Cytoplasmic segment spans residues 198 to 230 (DIFYIIRNRLSQSFSGSRETGAFYGREFKTAKS). Residues 231-254 (LLLVLFLFALCWLPLSIINCILYF) traverse the membrane as a helical segment. Topologically, residues 255 to 260 (DGQVPQ) are extracellular. A helical membrane pass occupies residues 261 to 283 (TVLYLGILLSHANSMMNPIVYAY). At 284 to 317 (KIKKFKETYLLILKACVMCQPSKSMDPSTEQTSE) the chain is on the cytoplasmic side. Cys-302 carries the S-palmitoyl cysteine lipid modification.

This sequence belongs to the G-protein coupled receptor 1 family. Post-translationally, phosphorylation on Thr-315 and Ser-316 may be crucial for rapid desensitization. Phosphorylation on Thr-315 may be necessary for phosphorylation on Ser-316 to occur. As to expression, most abundant in lung, spleen and pineal gland. Moderate expression in brain, kidney and testis.

Its subcellular location is the cell membrane. In terms of biological role, receptor for adenosine. The activity of this receptor is mediated by G proteins which inhibits adenylyl cyclase. This is Adenosine receptor A3 (ADORA3) from Ovis aries (Sheep).